Here is a 255-residue protein sequence, read N- to C-terminus: NAD kinase (255 aa).

Asp-44 acts as the Proton acceptor in catalysis. Residues 44–45 (DG), His-49, 114–115 (NE), Asp-144, Ala-152, 155–160 (SAYNLS), and Gln-216 each bind NAD(+).

Belongs to the NAD kinase family. A divalent metal cation serves as cofactor.

It localises to the cytoplasm. It catalyses the reaction NAD(+) + ATP = ADP + NADP(+) + H(+). Functionally, involved in the regulation of the intracellular balance of NAD and NADP, and is a key enzyme in the biosynthesis of NADP. Catalyzes specifically the phosphorylation on 2'-hydroxyl of the adenosine moiety of NAD to yield NADP. The chain is NAD kinase from Rickettsia rickettsii (strain Iowa).